Reading from the N-terminus, the 297-residue chain is Mycothiol acetyltransferase (297 aa).

N-acetyltransferase domains are found at residues 7–156 (VFSD…VTIR) and 153–297 (VTIR…PPPH). Position 38 (glutamate 38) interacts with 1D-myo-inositol 2-(L-cysteinylamino)-2-deoxy-alpha-D-glucopyranoside. An acetyl-CoA-binding site is contributed by 79–81 (VVV). Positions 180, 219, and 227 each coordinate 1D-myo-inositol 2-(L-cysteinylamino)-2-deoxy-alpha-D-glucopyranoside. Acetyl-CoA-binding positions include 231-233 (VGV) and 238-244 (QGLGLGR). Residue tyrosine 265 coordinates 1D-myo-inositol 2-(L-cysteinylamino)-2-deoxy-alpha-D-glucopyranoside. Acetyl-CoA is bound at residue 270–275 (NRPALR).

It belongs to the acetyltransferase family. MshD subfamily. As to quaternary structure, monomer.

The catalysed reaction is 1D-myo-inositol 2-(L-cysteinylamino)-2-deoxy-alpha-D-glucopyranoside + acetyl-CoA = mycothiol + CoA + H(+). Functionally, catalyzes the transfer of acetyl from acetyl-CoA to desacetylmycothiol (Cys-GlcN-Ins) to form mycothiol. This chain is Mycothiol acetyltransferase, found in Thermomonospora curvata (strain ATCC 19995 / DSM 43183 / JCM 3096 / KCTC 9072 / NBRC 15933 / NCIMB 10081 / Henssen B9).